The primary structure comprises 156 residues: D-aminoacyl-tRNA deacylase (156 aa).

Positions 137 to 138 (GP) match the Gly-cisPro motif, important for rejection of L-amino acids motif.

Belongs to the DTD family. Homodimer.

It is found in the cytoplasm. It catalyses the reaction glycyl-tRNA(Ala) + H2O = tRNA(Ala) + glycine + H(+). The enzyme catalyses a D-aminoacyl-tRNA + H2O = a tRNA + a D-alpha-amino acid + H(+). Functionally, an aminoacyl-tRNA editing enzyme that deacylates mischarged D-aminoacyl-tRNAs. Also deacylates mischarged glycyl-tRNA(Ala), protecting cells against glycine mischarging by AlaRS. Acts via tRNA-based rather than protein-based catalysis; rejects L-amino acids rather than detecting D-amino acids in the active site. By recycling D-aminoacyl-tRNA to D-amino acids and free tRNA molecules, this enzyme counteracts the toxicity associated with the formation of D-aminoacyl-tRNA entities in vivo and helps enforce protein L-homochirality. The polypeptide is D-aminoacyl-tRNA deacylase (Dictyoglomus turgidum (strain DSM 6724 / Z-1310)).